A 298-amino-acid chain; its full sequence is MEEKQILCVGLVVLDVISLVDKYPKEDSEIRCLSQRWQRGGNASNSCTVLSLLGAPCAFMGSMAPGHVADFLVADFRRRGVDVSQVAWQSKGDTPSSCCIINNSNGNRTIVLHDTSLPDVSATDFEKVDLTQFKWIHIEGRNASEQVKMLQRIDAHNTRQPPEQKIRVSVEVEKPREELFQLFGYGDVVFVSKDVAKHLGFQSAEEALRGLYGRVRKGAVLVCAWAEEGADALGPDGKLLHSDAFPPPRVVDTLGAGDTFNASVIFSLSQGRSVQEALRFGCQVAGKKCGLQGFDGIV.

Positions 15, 41, 42, and 45 each coordinate beta-D-fructose. ATP-binding positions include Arg108, 226–229, and 255–258; these read AEEG and GAGD. Residue Asp258 coordinates beta-D-fructose.

The protein belongs to the carbohydrate kinase PfkB family. Homodimer. In terms of tissue distribution, most abundant in liver, kidney, gut, spleen and pancreas. Low levels also found in adrenal, muscle, brain and eye.

It catalyses the reaction beta-D-fructose + ATP = beta-D-fructose 1-phosphate + ADP + H(+). Its pathway is carbohydrate metabolism; fructose metabolism. Its activity is regulated as follows. Requires potassium. Inhibition by ADP. In terms of biological role, catalyzes the phosphorylation of the ketose sugar fructose to fructose-1-phosphate. The polypeptide is Ketohexokinase (Homo sapiens (Human)).